Reading from the N-terminus, the 536-residue chain is CUGBP Elav-like family member 2 (536 aa).

RRM domains follow at residues 58–141 (IKMF…PADS), 150–230 (RKLF…FADT), and 451–529 (ANLF…LKRS).

The protein belongs to the CELF/BRUNOL family.

It is found in the nucleus. The protein resides in the cytoplasm. Its function is as follows. RNA-binding protein implicated in the regulation of several post-transcriptional events. May be involved in pre-mRNA alternative splicing, mRNA translation repression and stability. This Xenopus laevis (African clawed frog) protein is CUGBP Elav-like family member 2 (celf2).